A 284-amino-acid polypeptide reads, in one-letter code: 2-dehydro-3-deoxyphosphooctonate aldolase (284 aa).

It belongs to the KdsA family.

It localises to the cytoplasm. It catalyses the reaction D-arabinose 5-phosphate + phosphoenolpyruvate + H2O = 3-deoxy-alpha-D-manno-2-octulosonate-8-phosphate + phosphate. Its pathway is carbohydrate biosynthesis; 3-deoxy-D-manno-octulosonate biosynthesis; 3-deoxy-D-manno-octulosonate from D-ribulose 5-phosphate: step 2/3. It functions in the pathway bacterial outer membrane biogenesis; lipopolysaccharide biosynthesis. This Photorhabdus laumondii subsp. laumondii (strain DSM 15139 / CIP 105565 / TT01) (Photorhabdus luminescens subsp. laumondii) protein is 2-dehydro-3-deoxyphosphooctonate aldolase.